Reading from the N-terminus, the 227-residue chain is Mediator of RNA polymerase II transcription subunit 18 (227 aa).

This sequence belongs to the Mediator complex subunit 18 family. Component of the Mediator complex.

The protein resides in the nucleus. Component of the Mediator complex, a coactivator involved in the regulated transcription of nearly all RNA polymerase II-dependent genes. Mediator functions as a bridge to convey information from gene-specific regulatory proteins to the basal RNA polymerase II transcription machinery. Mediator is recruited to promoters by direct interactions with regulatory proteins and serves as a scaffold for the assembly of a functional preinitiation complex with RNA polymerase II and the general transcription factors. This chain is Mediator of RNA polymerase II transcription subunit 18 (mdt-18), found in Caenorhabditis briggsae.